The following is a 311-amino-acid chain: Pyrimidine-specific ribonucleoside hydrolase RihA (311 aa).

The active site involves His240.

Belongs to the IUNH family. RihA subfamily.

In terms of biological role, hydrolyzes with equal efficiency cytidine or uridine to ribose and cytosine or uracil, respectively. The protein is Pyrimidine-specific ribonucleoside hydrolase RihA of Escherichia coli (strain ATCC 8739 / DSM 1576 / NBRC 3972 / NCIMB 8545 / WDCM 00012 / Crooks).